Consider the following 429-residue polypeptide: UDP-N-acetylglucosamine 1-carboxyvinyltransferase 2 (429 aa).

22-23 (KN) provides a ligand contact to phosphoenolpyruvate. Arginine 93 serves as a coordination point for UDP-N-acetyl-alpha-D-glucosamine. Cysteine 117 (proton donor) is an active-site residue. The residue at position 117 (cysteine 117) is a 2-(S-cysteinyl)pyruvic acid O-phosphothioketal. UDP-N-acetyl-alpha-D-glucosamine contacts are provided by residues 122 to 126 (RPIDQ), aspartate 305, and isoleucine 327.

The protein belongs to the EPSP synthase family. MurA subfamily.

The protein resides in the cytoplasm. It catalyses the reaction phosphoenolpyruvate + UDP-N-acetyl-alpha-D-glucosamine = UDP-N-acetyl-3-O-(1-carboxyvinyl)-alpha-D-glucosamine + phosphate. Its pathway is cell wall biogenesis; peptidoglycan biosynthesis. Its function is as follows. Cell wall formation. Adds enolpyruvyl to UDP-N-acetylglucosamine. The polypeptide is UDP-N-acetylglucosamine 1-carboxyvinyltransferase 2 (Bacillus cereus (strain ATCC 14579 / DSM 31 / CCUG 7414 / JCM 2152 / NBRC 15305 / NCIMB 9373 / NCTC 2599 / NRRL B-3711)).